The chain runs to 466 residues: Exodeoxyribonuclease 7 large subunit (466 aa).

Belongs to the XseA family. Heterooligomer composed of large and small subunits.

It is found in the cytoplasm. It catalyses the reaction Exonucleolytic cleavage in either 5'- to 3'- or 3'- to 5'-direction to yield nucleoside 5'-phosphates.. In terms of biological role, bidirectionally degrades single-stranded DNA into large acid-insoluble oligonucleotides, which are then degraded further into small acid-soluble oligonucleotides. This is Exodeoxyribonuclease 7 large subunit from Ruthia magnifica subsp. Calyptogena magnifica.